A 449-amino-acid chain; its full sequence is DNA-directed RNA polymerase subunit Rpo1C (449 aa).

Positions 1 to 68 (MQDVIKKIED…EGEELLKAVE (68 aa)) are unknown. Residues 69–449 (DEYLRILKVR…TGSVSVIMKK (381 aa)) form a DNA-directed RNA polymerase subunit Rpo1C region.

This sequence belongs to the RNA polymerase beta' chain family. In terms of assembly, part of the RNA polymerase complex.

Its subcellular location is the cytoplasm. The enzyme catalyses RNA(n) + a ribonucleoside 5'-triphosphate = RNA(n+1) + diphosphate. DNA-dependent RNA polymerase (RNAP) catalyzes the transcription of DNA into RNA using the four ribonucleoside triphosphates as substrates. Forms part of the jaw domain. The polypeptide is DNA-directed RNA polymerase subunit Rpo1C (Methanothermobacter thermautotrophicus (strain Winter) (Methanobacterium thermoautotrophicum)).